Reading from the N-terminus, the 982-residue chain is Chromosome partition protein Smc (982 aa).

33–40 serves as a coordination point for ATP; sequence PNGSGKSN. 2 coiled-coil regions span residues 171 to 235 and 263 to 377; these read RYTK…LVAD and QLQL…NLNQ. One can recognise an SMC hinge domain in the interval 416-535; the sequence is TGLLNTLNTF…ASDLQAALKL (120 aa). 3 coiled-coil regions span residues 568–627, 669–713, and 753–818; these read LSLY…ERVN, AERD…RSQL, and IKLS…EIDE.

The protein belongs to the SMC family. Homodimer.

The protein localises to the cytoplasm. Functionally, required for chromosome condensation and partitioning. In Mycoplasma pneumoniae (strain ATCC 29342 / M129 / Subtype 1) (Mycoplasmoides pneumoniae), this protein is Chromosome partition protein Smc.